A 920-amino-acid chain; its full sequence is Histone-lysine N-methyltransferase, H3 lysine-4 specific (920 aa).

One can recognise an RRM domain in the interval T94–D179. The span at K205–R216 shows a compositional bias: basic and acidic residues. Disordered regions lie at residues K205–N242 and K448–N485. 2 stretches are compositionally biased toward polar residues: residues P233–N242 and S453–K462. Residues T463–E476 show a composition bias toward basic residues. The RxxxRR motif motif lies at R749–R754. Positions K781–K898 constitute an SET domain. Position 897 (Y897) interacts with S-adenosyl-L-methionine. Residues D904 to N920 form the Post-SET domain.

The protein belongs to the class V-like SAM-binding methyltransferase superfamily. As to quaternary structure, component of the Set1C/COMPASS complex composed of ash2, sdc1, set1, shg1, spp1, swd1, swd2 and swd3.

The protein resides in the nucleus. The protein localises to the chromosome. It carries out the reaction L-lysyl(4)-[histone H3] + 3 S-adenosyl-L-methionine = N(6),N(6),N(6)-trimethyl-L-lysyl(4)-[histone H3] + 3 S-adenosyl-L-homocysteine + 3 H(+). The enzyme catalyses N(6)-methyl-L-lysyl(4)-[histone H3] + S-adenosyl-L-methionine = N(6),N(6)-dimethyl-L-lysyl(4)-[histone H3] + S-adenosyl-L-homocysteine + H(+). It catalyses the reaction N(6),N(6)-dimethyl-L-lysyl(4)-[histone H3] + S-adenosyl-L-methionine = N(6),N(6),N(6)-trimethyl-L-lysyl(4)-[histone H3] + S-adenosyl-L-homocysteine + H(+). Catalytic component of the COMPASS (Set1C) complex that specifically mono-, di- and trimethylates histone H3 to form H3K4me1/2/3. Binds RNA which might negatively affect its histone methyltransferase activity. COMPASS recognizes ubiquitinated H2B on one face of the nucleosome which stimulates the methylation of H3 on the opposing face. Methylation promotes maintenance of active chromatin states at euchromatic chromosomal domains and is present throughout the cell cycle. Plays a role in telomere maintenance and DNA repair in an ATM kinase rad3-dependent pathway. Required for efficient telomeric and centromeric silencing. The polypeptide is Histone-lysine N-methyltransferase, H3 lysine-4 specific (Schizosaccharomyces pombe (strain 972 / ATCC 24843) (Fission yeast)).